The chain runs to 287 residues: Bifunctional protein FolD 2 (287 aa).

Residues Gly-166–Ser-168 and Ile-232 contribute to the NADP(+) site.

It belongs to the tetrahydrofolate dehydrogenase/cyclohydrolase family. Homodimer.

The enzyme catalyses (6R)-5,10-methylene-5,6,7,8-tetrahydrofolate + NADP(+) = (6R)-5,10-methenyltetrahydrofolate + NADPH. The catalysed reaction is (6R)-5,10-methenyltetrahydrofolate + H2O = (6R)-10-formyltetrahydrofolate + H(+). Its pathway is one-carbon metabolism; tetrahydrofolate interconversion. Functionally, catalyzes the oxidation of 5,10-methylenetetrahydrofolate to 5,10-methenyltetrahydrofolate and then the hydrolysis of 5,10-methenyltetrahydrofolate to 10-formyltetrahydrofolate. This is Bifunctional protein FolD 2 from Hydrogenovibrio crunogenus (strain DSM 25203 / XCL-2) (Thiomicrospira crunogena).